We begin with the raw amino-acid sequence, 340 residues long: uncharacterized protein (340 aa).

The Radical SAM core domain maps to 58 to 307 (AALPFRYTVN…PSYREMLRER (250 aa)). Positions 72, 76, and 79 each coordinate [4Fe-4S] cluster. The next 2 helical transmembrane spans lie at 140–160 (YALM…LSIL) and 243–263 (QLLG…GLHL).

[4Fe-4S] cluster is required as a cofactor.

It localises to the cell membrane. This is an uncharacterized protein from Mycobacterium tuberculosis (strain CDC 1551 / Oshkosh).